The following is a 69-amino-acid chain: UPF0270 protein VCM66_2532 (69 aa).

Belongs to the UPF0270 family.

The protein is UPF0270 protein VCM66_2532 of Vibrio cholerae serotype O1 (strain M66-2).